A 399-amino-acid polypeptide reads, in one-letter code: Tryptophan synthase beta chain (399 aa).

K92 carries the N6-(pyridoxal phosphate)lysine modification.

It belongs to the TrpB family. As to quaternary structure, tetramer of two alpha and two beta chains. It depends on pyridoxal 5'-phosphate as a cofactor.

It catalyses the reaction (1S,2R)-1-C-(indol-3-yl)glycerol 3-phosphate + L-serine = D-glyceraldehyde 3-phosphate + L-tryptophan + H2O. It participates in amino-acid biosynthesis; L-tryptophan biosynthesis; L-tryptophan from chorismate: step 5/5. In terms of biological role, the beta subunit is responsible for the synthesis of L-tryptophan from indole and L-serine. In Legionella pneumophila (strain Corby), this protein is Tryptophan synthase beta chain.